The primary structure comprises 308 residues: Thymidylate synthase (308 aa).

DUMP contacts are provided by residues Arg26 and 170 to 171; that span reads RR. The Nucleophile role is filled by Cys190. DUMP is bound by residues 210–213, Asn221, and 251–253; these read RSCD and HVY. Asp213 provides a ligand contact to (6R)-5,10-methylene-5,6,7,8-tetrahydrofolate. Ala307 contacts (6R)-5,10-methylene-5,6,7,8-tetrahydrofolate.

This sequence belongs to the thymidylate synthase family. Bacterial-type ThyA subfamily. As to quaternary structure, homodimer.

Its subcellular location is the cytoplasm. The catalysed reaction is dUMP + (6R)-5,10-methylene-5,6,7,8-tetrahydrofolate = 7,8-dihydrofolate + dTMP. Its pathway is pyrimidine metabolism; dTTP biosynthesis. Its function is as follows. Catalyzes the reductive methylation of 2'-deoxyuridine-5'-monophosphate (dUMP) to 2'-deoxythymidine-5'-monophosphate (dTMP) while utilizing 5,10-methylenetetrahydrofolate (mTHF) as the methyl donor and reductant in the reaction, yielding dihydrofolate (DHF) as a by-product. This enzymatic reaction provides an intracellular de novo source of dTMP, an essential precursor for DNA biosynthesis. The sequence is that of Thymidylate synthase from Rhizorhabdus wittichii (strain DSM 6014 / CCUG 31198 / JCM 15750 / NBRC 105917 / EY 4224 / RW1) (Sphingomonas wittichii).